The primary structure comprises 523 residues: ATP synthase subunit alpha (523 aa).

179 to 186 (GDRQTGKT) is an ATP binding site.

This sequence belongs to the ATPase alpha/beta chains family. In terms of assembly, F-type ATPases have 2 components, CF(1) - the catalytic core - and CF(0) - the membrane proton channel. CF(1) has five subunits: alpha(3), beta(3), gamma(1), delta(1), epsilon(1). CF(0) has three main subunits: a(1), b(2) and c(9-12). The alpha and beta chains form an alternating ring which encloses part of the gamma chain. CF(1) is attached to CF(0) by a central stalk formed by the gamma and epsilon chains, while a peripheral stalk is formed by the delta and b chains.

Its subcellular location is the cell inner membrane. The enzyme catalyses ATP + H2O + 4 H(+)(in) = ADP + phosphate + 5 H(+)(out). In terms of biological role, produces ATP from ADP in the presence of a proton gradient across the membrane. The alpha chain is a regulatory subunit. This chain is ATP synthase subunit alpha, found in Vibrio vulnificus (strain YJ016).